Consider the following 192-residue polypeptide: Endoribonuclease YbeY (192 aa).

Zn(2+) contacts are provided by histidine 109, histidine 113, and histidine 119. The segment at 142-192 (VGAALREGGPARAAETETSWTRSPTSTSTRSPSGSTARGTRARSSRAGSGR) is disordered. A compositionally biased stretch (low complexity) spans 159-180 (TSWTRSPTSTSTRSPSGSTARG).

Belongs to the endoribonuclease YbeY family. Zn(2+) is required as a cofactor.

The protein resides in the cytoplasm. Functionally, single strand-specific metallo-endoribonuclease involved in late-stage 70S ribosome quality control and in maturation of the 3' terminus of the 16S rRNA. This Anaeromyxobacter sp. (strain Fw109-5) protein is Endoribonuclease YbeY.